The primary structure comprises 267 residues: Translation initiation factor 2 subunit alpha (267 aa).

An S1 motif domain is found at 12-83; it reads GEYVIATVKE…RRKTVDVSLK (72 aa).

The protein belongs to the eIF-2-alpha family. In terms of assembly, heterotrimer composed of an alpha, a beta and a gamma chain.

EIF-2 functions in the early steps of protein synthesis by forming a ternary complex with GTP and initiator tRNA. The chain is Translation initiation factor 2 subunit alpha from Staphylothermus marinus (strain ATCC 43588 / DSM 3639 / JCM 9404 / F1).